Reading from the N-terminus, the 156-residue chain is Small ribosomal subunit protein uS7 (156 aa).

The protein belongs to the universal ribosomal protein uS7 family. In terms of assembly, part of the 30S ribosomal subunit. Contacts proteins S9 and S11.

Its function is as follows. One of the primary rRNA binding proteins, it binds directly to 16S rRNA where it nucleates assembly of the head domain of the 30S subunit. Is located at the subunit interface close to the decoding center, probably blocks exit of the E-site tRNA. The protein is Small ribosomal subunit protein uS7 of Beijerinckia indica subsp. indica (strain ATCC 9039 / DSM 1715 / NCIMB 8712).